The primary structure comprises 333 residues: Probable endo-beta-1,4-glucanase B (333 aa).

The signal sequence occupies residues 1–17; that stretch reads MKFRNLFFAAVAGSAVA. 2 N-linked (GlcNAc...) asparagine glycosylation sites follow: N37 and N100. E160 serves as the catalytic Proton donor. Residue E267 is the Nucleophile of the active site.

This sequence belongs to the glycosyl hydrolase 5 (cellulase A) family.

The protein resides in the secreted. It carries out the reaction Endohydrolysis of (1-&gt;4)-beta-D-glucosidic linkages in cellulose, lichenin and cereal beta-D-glucans.. In terms of biological role, has endoglucanase activity on substrates containing beta-1,4 glycosidic bonds, like in carboxymethylcellulose (CMC), hydroxyethylcellulose (HEC) and beta-glucan. Involved in the degradation of complex natural cellulosic substrates. The polypeptide is Probable endo-beta-1,4-glucanase B (eglB) (Aspergillus oryzae (strain ATCC 42149 / RIB 40) (Yellow koji mold)).